A 194-amino-acid chain; its full sequence is dTTP/UTP pyrophosphatase (194 aa).

Residue Asp77 is the Proton acceptor of the active site.

The protein belongs to the Maf family. YhdE subfamily. It depends on a divalent metal cation as a cofactor.

The protein resides in the cytoplasm. The enzyme catalyses dTTP + H2O = dTMP + diphosphate + H(+). The catalysed reaction is UTP + H2O = UMP + diphosphate + H(+). Nucleoside triphosphate pyrophosphatase that hydrolyzes dTTP and UTP. May have a dual role in cell division arrest and in preventing the incorporation of modified nucleotides into cellular nucleic acids. In Flavobacterium johnsoniae (strain ATCC 17061 / DSM 2064 / JCM 8514 / BCRC 14874 / CCUG 350202 / NBRC 14942 / NCIMB 11054 / UW101) (Cytophaga johnsonae), this protein is dTTP/UTP pyrophosphatase.